The chain runs to 292 residues: uncharacterized protein (292 aa).

The region spanning 1–58 is the HTH lysR-type domain; it reads MEWEQLEYFQTLARMQHVTKAAKSLSITQPALSRSIARLENHLGVPLFDRQGRSISLN. The H-T-H motif DNA-binding region spans 18-37; sequence VTKAAKSLSITQPALSRSIA.

It belongs to the LysR transcriptional regulatory family.

This is an uncharacterized protein from Bacillus subtilis (strain 168).